Here is a 558-residue protein sequence, read N- to C-terminus: Cytochrome P450 monooxygenase sdnT (558 aa).

Residues 21–41 traverse the membrane as a helical segment; it reads IISLTTCFVCAFAVSFVALAI. Positions 298 to 317 are disordered; the sequence is QNAGSNTRPKPPKRKQDTQP. N464 and N495 each carry an N-linked (GlcNAc...) asparagine glycan. Position 505 (C505) interacts with heme.

Belongs to the cytochrome P450 family. Heme is required as a cofactor.

Its subcellular location is the membrane. It functions in the pathway antibiotic biosynthesis. Its function is as follows. Cytochrome P450 monooxygenase; part of the gene cluster that mediates the biosynthesis of sordarin and hypoxysordarin, glycoside antibiotics with a unique tetracyclic diterpene aglycone structure. First, the geranylgeranyl diphosphate synthase sdnC constructs GGDP from farnesyl diphosphate and isopentenyl diphosphate. The diterpene cyclase sdnA then catalyzes the cyclization of GGDP to afford cycloaraneosene. Cycloaraneosene is then hydroxylated four times by the putative cytochrome P450 monooxygenases sdnB, sdnE, sdnF and sdnH to give a hydroxylated cycloaraneosene derivative such as cycloaraneosene-8,9,13,19-tetraol. Although the order of the hydroxylations is unclear, at least C8, C9 and C13 of the cycloaraneosene skeleton are hydroxylated before the sordaricin formation. Dehydration of the 13-hydroxy group of the hydroxylated cycloaraneosene derivative might be catalyzed by an unassigned hypothetical protein such as sdnG and sdnP to construct the cyclopentadiene moiety. The FAD-dependent oxidoreductase sdnN is proposed to catalyze the oxidation at C9 of the hydroxylated cycloaraneosene derivative and also catalyze the Baeyer-Villiger oxidation to give the lactone intermediate. The presumed lactone intermediate would be hydrolyzed to give an acrolein moiety and a carboxylate moiety. Then, [4+2]cycloaddition would occur between the acrolein moiety and the cyclopentadiene moiety to give sordaricin. SdnN might also be involved in the [4+2]cycloaddition after the hypothesized oxidation to accommodate the oxidized product and prompt the [4+2]cycloaddition. GDP-6-deoxy-D-altrose may be biosynthesized from GDP-D-mannose by the putative GDP-mannose-4,6-dehydratase sdnI and the short-chain dehydrogenase sdnK. The glycosyltransferase sdnJ catalyzes the attachment of 6-deoxy-D-altrose onto the 19-hydroxy group of sordaricin to give 4'-O-demethylsordarin. The methyltransferase sdnD would complete the biosynthesis of sordarin. Sordarin can be further modified into hypoxysordarin. The unique acyl chain at the 3'-hydroxy group of hypoxysordarin would be constructed by an iterative type I PKS sdnO and the trans-acting polyketide methyltransferase sdnL. SdnL would be responsible for the introduction of an alpha-methyl group of the polyketide chain. Alternatively, the beta-lactamase-like protein sdnR might be responsible for the cleavage and transfer of the polyketide chain from the PKS sdnO to sordarin. Two putative cytochrome P450 monooxygenases, sdnQ and sdnT, might catalyze the epoxidations of the polyketide chain to complete the biosynthesis of hypoxysordarin. Transcriptional regulators sdnM and sdnS are presumably encoded for the transcriptional regulation of the expression of the sdn gene cluster. The protein is Cytochrome P450 monooxygenase sdnT of Sordaria araneosa (Pleurage araneosa).